The following is a 252-amino-acid chain: Low-density lipoprotein receptor-related protein 5-like protein (252 aa).

LDL-receptor class B repeat units follow at residues 3 to 45, 46 to 88, 89 to 132, 133 to 175, and 176 to 218; these read GHVY…NWVA, RSLY…HPEM, GLTY…DLQE, GKLY…LGDF, and IYWT…DKVV. A disordered region spans residues 223–247; sequence HADRNGGAATCASSRPTQPGLAAPS.

This Homo sapiens (Human) protein is Low-density lipoprotein receptor-related protein 5-like protein (LRP5L).